The chain runs to 282 residues: 4-diphosphocytidyl-2-C-methyl-D-erythritol kinase (282 aa).

Lys-9 is a catalytic residue. Position 98–108 (Pro-98–Ser-108) interacts with ATP. Asp-140 is a catalytic residue.

The protein belongs to the GHMP kinase family. IspE subfamily. Homodimer.

The enzyme catalyses 4-CDP-2-C-methyl-D-erythritol + ATP = 4-CDP-2-C-methyl-D-erythritol 2-phosphate + ADP + H(+). The protein operates within isoprenoid biosynthesis; isopentenyl diphosphate biosynthesis via DXP pathway; isopentenyl diphosphate from 1-deoxy-D-xylulose 5-phosphate: step 3/6. Catalyzes the phosphorylation of the position 2 hydroxy group of 4-diphosphocytidyl-2C-methyl-D-erythritol. The protein is 4-diphosphocytidyl-2-C-methyl-D-erythritol kinase of Salmonella paratyphi A (strain ATCC 9150 / SARB42).